The sequence spans 122 residues: Large ribosomal subunit protein uL24 (122 aa).

The protein belongs to the universal ribosomal protein uL24 family. In terms of assembly, part of the 50S ribosomal subunit.

One of two assembly initiator proteins, it binds directly to the 5'-end of the 23S rRNA, where it nucleates assembly of the 50S subunit. Functionally, located at the polypeptide exit tunnel on the outside of the subunit. In Pyrobaculum arsenaticum (strain DSM 13514 / JCM 11321 / PZ6), this protein is Large ribosomal subunit protein uL24.